Consider the following 353-residue polypeptide: Mitogen-activated protein kinase mpkB (353 aa).

One can recognise a Protein kinase domain in the interval 21–309 (YEIQDVIGEG…VEEALRHPYL (289 aa)). Residues 27–35 (IGEGAYGVV) and Lys-50 contribute to the ATP site. The active-site Proton acceptor is the Asp-145.

Belongs to the protein kinase superfamily. Ser/Thr protein kinase family. MAP kinase subfamily. Mg(2+) serves as cofactor.

It is found in the nucleus. The catalysed reaction is L-seryl-[protein] + ATP = O-phospho-L-seryl-[protein] + ADP + H(+). The enzyme catalyses L-threonyl-[protein] + ATP = O-phospho-L-threonyl-[protein] + ADP + H(+). With respect to regulation, activated by threonine and tyrosine phosphorylation. Its function is as follows. Mitogen-activated protein kinase (MAPK) that plays a role in conidiation and regulation of secondary metabolite biosynthesis. Acts as a repressor of dihydroxynaphthalene (DHN)-melanin production. This Aspergillus fumigatus (strain CBS 144.89 / FGSC A1163 / CEA10) (Neosartorya fumigata) protein is Mitogen-activated protein kinase mpkB.